We begin with the raw amino-acid sequence, 321 residues long: Chlorohydroquinone/hydroquinone 1,2-dioxygenase (321 aa).

2 consecutive VOC domains span residues 10–138 and 160–282; these read GLHH…IIEQ and GFHS…ASVT. H162, H229, and E278 together coordinate Fe cation.

This sequence belongs to the extradiol ring-cleavage dioxygenase family. Fe(2+) serves as cofactor.

It catalyses the reaction hydroquinone + O2 = (2E,4Z)-4-hydroxy-6-oxohexa-2,4-dienoate + H(+). The enzyme catalyses chlorohydroquinone + O2 = 5-chlorocarbonyl-4-hydroxy-penta-2,4-dienoate + H(+). Its pathway is xenobiotic degradation; gamma-hexachlorocyclohexane degradation. Functionally, cleaves aromatic rings with two hydroxyl groups at para positions with consumption of O(2). Catalyzes the cleavage of chlorohydroquinone (CHQ), as part of the gamma-hexachlorocyclohexane (gamma-HCH or lindane) degradation pathway, producing 5-chlorocarbonyl-4-hydroxy-penta-2,4-dienoate as an intermediate product that can react with water yielding maleylacetate. This degradation pathway allows S.japonicum UT26 to grow on gamma-HCH as the sole source of carbon and energy. Can also use hydroquinone (HQ) as substrate, leading to gamma-hydroxymuconic semialdehyde. Is not able to convert catechol, contrary to meta-cleavage dioxygenases. In Sphingobium indicum (strain DSM 16413 / CCM 7287 / MTCC 6362 / UT26 / NBRC 101211 / UT26S) (Sphingobium japonicum), this protein is Chlorohydroquinone/hydroquinone 1,2-dioxygenase.